We begin with the raw amino-acid sequence, 1050 residues long: DNA-directed RNA polymerase subunit beta (1050 aa).

It belongs to the RNA polymerase beta chain family. As to quaternary structure, in plastids the minimal PEP RNA polymerase catalytic core is composed of four subunits: alpha, beta, beta', and beta''. When a (nuclear-encoded) sigma factor is associated with the core the holoenzyme is formed, which can initiate transcription (Potential).

It localises to the plastid. The protein resides in the apicoplast. The enzyme catalyses RNA(n) + a ribonucleoside 5'-triphosphate = RNA(n+1) + diphosphate. Functionally, DNA-dependent RNA polymerase catalyzes the transcription of DNA into RNA using the four ribonucleoside triphosphates as substrates. This chain is DNA-directed RNA polymerase subunit beta (rpoB), found in Neospora caninum (Coccidian parasite).